Here is a 129-residue protein sequence, read N- to C-terminus: Follitropin subunit beta (129 aa).

The signal sequence occupies residues 1–18 (MKTLQFFFLFCCWKAICC). Intrachain disulfides connect C21/C69, C35/C84, C38/C122, C46/C100, C50/C102, and C105/C112. N-linked (GlcNAc...) asparagine glycosylation is found at N25 and N42.

The protein belongs to the glycoprotein hormones subunit beta family. Heterodimer. The active follitropin is a heterodimer composed of an alpha chain/CGA shared with other hormones and a unique beta chain/FSHB shown here.

Its subcellular location is the secreted. Its function is as follows. Together with the alpha chain CGA constitutes follitropin, the follicle-stimulating hormone, and provides its biological specificity to the hormone heterodimer. Binds FSHR, a G protein-coupled receptor, on target cells to activate downstream signaling pathways. Follitropin is involved in follicle development and spermatogenesis in reproductive organs. The sequence is that of Follitropin subunit beta (FSHB) from Homo sapiens (Human).